We begin with the raw amino-acid sequence, 121 residues long: MARIAGVDIPRDKRVEVSLTYIYGIGLTRAKAILAKAGVNPDIRVKDLEDGDIQKLRGATEAFTIEGDLRRQEGMALKRLQDIGCVRGRRHRMSLPVRGQRTRTNARTRRGARKTVAGKKK.

Positions 97–121 (VRGQRTRTNARTRRGARKTVAGKKK) are disordered. The span at 100–121 (QRTRTNARTRRGARKTVAGKKK) shows a compositional bias: basic residues.

The protein belongs to the universal ribosomal protein uS13 family. Part of the 30S ribosomal subunit. Forms a loose heterodimer with protein S19. Forms two bridges to the 50S subunit in the 70S ribosome.

Functionally, located at the top of the head of the 30S subunit, it contacts several helices of the 16S rRNA. In the 70S ribosome it contacts the 23S rRNA (bridge B1a) and protein L5 of the 50S subunit (bridge B1b), connecting the 2 subunits; these bridges are implicated in subunit movement. Contacts the tRNAs in the A and P-sites. The polypeptide is Small ribosomal subunit protein uS13 (Synechococcus sp. (strain CC9902)).